A 182-amino-acid chain; its full sequence is Transcriptional repressor NrdR (182 aa).

The disordered stretch occupies residues 1–24; sequence MRCPYCGGLDTQVRDSRPTEDNTA. A zinc finger lies at 3-34; it reads CPYCGGLDTQVRDSRPTEDNTAIRRRRICPDC. Over residues 12–24 the composition is skewed to basic and acidic residues; the sequence is QVRDSRPTEDNTA. One can recognise an ATP-cone domain in the interval 49-139; it reads LMVLKRSGRR…VYRNFREAKD (91 aa). Residues 146–182 form a disordered region; it reads ELSQPELAQSDDVKAEGGAEGGRDKPKAAGKPPRSAE. The segment covering 156–172 has biased composition (basic and acidic residues); that stretch reads DDVKAEGGAEGGRDKPK.

Belongs to the NrdR family. The cofactor is Zn(2+).

In terms of biological role, negatively regulates transcription of bacterial ribonucleotide reductase nrd genes and operons by binding to NrdR-boxes. This is Transcriptional repressor NrdR from Xanthobacter autotrophicus (strain ATCC BAA-1158 / Py2).